The primary structure comprises 410 residues: LL-diaminopimelate aminotransferase (410 aa).

Residues tyrosine 15 and glycine 42 each coordinate substrate. Pyridoxal 5'-phosphate-binding positions include tyrosine 72, 108–109, tyrosine 132, asparagine 187, tyrosine 218, and 246–248; these read SK and SFS. Lysine 109, tyrosine 132, and asparagine 187 together coordinate substrate. An N6-(pyridoxal phosphate)lysine modification is found at lysine 249. Positions 257 and 292 each coordinate pyridoxal 5'-phosphate. Positions 292 and 388 each coordinate substrate.

This sequence belongs to the class-I pyridoxal-phosphate-dependent aminotransferase family. LL-diaminopimelate aminotransferase subfamily. Homodimer. It depends on pyridoxal 5'-phosphate as a cofactor.

The enzyme catalyses (2S,6S)-2,6-diaminopimelate + 2-oxoglutarate = (S)-2,3,4,5-tetrahydrodipicolinate + L-glutamate + H2O + H(+). Its pathway is amino-acid biosynthesis; L-lysine biosynthesis via DAP pathway; LL-2,6-diaminopimelate from (S)-tetrahydrodipicolinate (aminotransferase route): step 1/1. Its function is as follows. Involved in the synthesis of meso-diaminopimelate (m-DAP or DL-DAP), required for both lysine and peptidoglycan biosynthesis. Catalyzes the direct conversion of tetrahydrodipicolinate to LL-diaminopimelate. This is LL-diaminopimelate aminotransferase from Syntrophotalea carbinolica (strain DSM 2380 / NBRC 103641 / GraBd1) (Pelobacter carbinolicus).